Reading from the N-terminus, the 297-residue chain is N-acetylmuramic acid 6-phosphate etherase (297 aa).

The region spanning 56-219 (AIEAFNKGGR…STISMIGIGK (164 aa)) is the SIS domain. Residue E84 is the Proton donor of the active site. The active site involves E115.

The protein belongs to the GCKR-like family. MurNAc-6-P etherase subfamily. In terms of assembly, homodimer.

It catalyses the reaction N-acetyl-D-muramate 6-phosphate + H2O = N-acetyl-D-glucosamine 6-phosphate + (R)-lactate. It participates in amino-sugar metabolism; N-acetylmuramate degradation. Functionally, specifically catalyzes the cleavage of the D-lactyl ether substituent of MurNAc 6-phosphate, producing GlcNAc 6-phosphate and D-lactate. In Lactococcus lactis subsp. cremoris (strain MG1363), this protein is N-acetylmuramic acid 6-phosphate etherase.